Reading from the N-terminus, the 203-residue chain is Probable flagellin 1 (203 aa).

Positions 1–11 (MGMRFLKNEKG) are excised as a propeptide.

This sequence belongs to the archaeal flagellin family.

It is found in the archaeal flagellum. In terms of biological role, flagellin is the subunit protein which polymerizes to form the filaments of archaeal flagella. This chain is Probable flagellin 1 (flaB1), found in Archaeoglobus fulgidus (strain ATCC 49558 / DSM 4304 / JCM 9628 / NBRC 100126 / VC-16).